Here is a 463-residue protein sequence, read N- to C-terminus: Cysteine--tRNA ligase (463 aa).

Cysteine 29 is a Zn(2+) binding site. A 'HIGH' region motif is present at residues 31–41 (PTVYNYAHIGN). Residues cysteine 211, histidine 236, and glutamate 240 each coordinate Zn(2+). Residues 269-273 (KMSKS) carry the 'KMSKS' region motif. Lysine 272 serves as a coordination point for ATP.

It belongs to the class-I aminoacyl-tRNA synthetase family. In terms of assembly, monomer. The cofactor is Zn(2+).

It localises to the cytoplasm. It catalyses the reaction tRNA(Cys) + L-cysteine + ATP = L-cysteinyl-tRNA(Cys) + AMP + diphosphate. The chain is Cysteine--tRNA ligase from Caulobacter vibrioides (strain ATCC 19089 / CIP 103742 / CB 15) (Caulobacter crescentus).